Reading from the N-terminus, the 357-residue chain is Arginine kinase (357 aa).

The residue at position 2 (A2) is an N-acetylalanine. Residues K9–K91 form the Phosphagen kinase N-terminal domain. G64 to Y68 contributes to the L-arginine binding site. Positions F119–M356 constitute a Phosphagen kinase C-terminal domain. Residues S122–R126 and H185 contribute to the ATP site. E225 is a binding site for L-arginine. R229 lines the ATP pocket. C271 is an L-arginine binding site. ATP contacts are provided by residues R280 to H284 and R309 to E314. E314 is a binding site for L-arginine.

The protein belongs to the ATP:guanido phosphotransferase family.

The catalysed reaction is L-arginine + ATP = N(omega)-phospho-L-arginine + ADP + H(+). The polypeptide is Arginine kinase (Carcinus maenas (Common shore crab)).